Consider the following 482-residue polypeptide: tRNA sulfurtransferase (482 aa).

In terms of domain architecture, THUMP spans 61–165 (LAIRDALTRI…DDRLLLIKGR (105 aa)). ATP is bound by residues 183 to 184 (LI), Lys-265, Gly-287, and Gln-296. Cys-344 and Cys-456 are disulfide-bonded. Residues 404–482 (FGPNDVILDI…GFNNVKVYRP (79 aa)) enclose the Rhodanese domain. Cys-456 acts as the Cysteine persulfide intermediate in catalysis.

It belongs to the ThiI family.

The protein resides in the cytoplasm. The catalysed reaction is [ThiI sulfur-carrier protein]-S-sulfanyl-L-cysteine + a uridine in tRNA + 2 reduced [2Fe-2S]-[ferredoxin] + ATP + H(+) = [ThiI sulfur-carrier protein]-L-cysteine + a 4-thiouridine in tRNA + 2 oxidized [2Fe-2S]-[ferredoxin] + AMP + diphosphate. The enzyme catalyses [ThiS sulfur-carrier protein]-C-terminal Gly-Gly-AMP + S-sulfanyl-L-cysteinyl-[cysteine desulfurase] + AH2 = [ThiS sulfur-carrier protein]-C-terminal-Gly-aminoethanethioate + L-cysteinyl-[cysteine desulfurase] + A + AMP + 2 H(+). It functions in the pathway cofactor biosynthesis; thiamine diphosphate biosynthesis. Functionally, catalyzes the ATP-dependent transfer of a sulfur to tRNA to produce 4-thiouridine in position 8 of tRNAs, which functions as a near-UV photosensor. Also catalyzes the transfer of sulfur to the sulfur carrier protein ThiS, forming ThiS-thiocarboxylate. This is a step in the synthesis of thiazole, in the thiamine biosynthesis pathway. The sulfur is donated as persulfide by IscS. The sequence is that of tRNA sulfurtransferase from Escherichia coli O8 (strain IAI1).